Consider the following 195-residue polypeptide: Obelin (195 aa).

Positions 1–6 (MSSKYA) are excised as a propeptide. 4 EF-hand domains span residues 17 to 52 (RWIK…DICA), 53 to 88 (KLEA…FPQF), 110 to 145 (LIRE…SGIS), and 146 to 181 (PSQE…FWYT). Ca(2+)-binding residues include Asp30, Asn32, Asn34, Lys36, and Glu41. Asp123, Asp125, Ser127, Thr129, Glu134, Asp159, Asp161, Ser163, Asp165, and Glu170 together coordinate Ca(2+).

It belongs to the aequorin family.

In terms of biological role, ca(2+)-dependent bioluminescence photoprotein. Displays an emission peak at 470 nm (blue light). Trace amounts of calcium ion trigger the intramolecular oxidation of the chromophore, coelenterazine into coelenteramide and CO(2) with the concomitant emission of light. In Obelia longissima (Black sea hydrozoan), this protein is Obelin.